We begin with the raw amino-acid sequence, 266 residues long: Anamorsin homolog (266 aa).

An N-terminal SAM-like domain region spans residues 1–164 (MIINFVGNTL…NITAENPDFL (164 aa)). The interval 165–185 (SNEDNDVSSDDEDLYNNEDDK) is linker. [4Fe-4S] cluster contacts are provided by Cys229, Cys232, Cys240, and Cys243. Short sequence motifs (cx2C motif) lie at residues 229-232 (CGNC) and 240-243 (CASC). Residues 229-243 (CGNCYLGDAFRCASC) are fe-S binding site B.

Belongs to the anamorsin family. As to quaternary structure, monomer. It depends on [4Fe-4S] cluster as a cofactor.

The protein resides in the cytoplasm. Its subcellular location is the mitochondrion intermembrane space. Component of the cytosolic iron-sulfur (Fe-S) protein assembly (CIA) machinery. Required for the maturation of extramitochondrial Fe-S proteins. Part of an electron transfer chain functioning in an early step of cytosolic Fe-S biogenesis, facilitating the de novo assembly of a [4Fe-4S] cluster on the cytosolic Fe-S scaffold complex. Electrons are transferred from NADPH via a FAD- and FMN-containing diflavin oxidoreductase. Together with the diflavin oxidoreductase, also required for the assembly of the diferric tyrosyl radical cofactor of ribonucleotide reductase (RNR), probably by providing electrons for reduction during radical cofactor maturation in the catalytic small subunit. In Plasmodium falciparum (isolate 3D7), this protein is Anamorsin homolog.